The following is a 159-amino-acid chain: Protein NrdI (159 aa).

It belongs to the NrdI family.

Probably involved in ribonucleotide reductase function. This chain is Protein NrdI, found in Rhodococcus erythropolis (strain PR4 / NBRC 100887).